We begin with the raw amino-acid sequence, 531 residues long: MELQSRPEALAVELARHQNGDLKKQLHERQPRIAALSDKQALGTITAVPVTGPQVSSLQRLAGQGAAVLPQVRPKTLIPDSLPVAPGRDRPPKQPPTFQKATVVSVKNPSPALPTANNTVSHVPAPGSQPQALAEPAALASPLSSAGVAYAIISTSPSNAAAMAPSTAVSVVSDSIKVQPLLISADNKPPPRLLSSPHPATHHCPLHPSSLPLTPPSPSLSPSPLHGIFQVIIIQPQVQTQPESTAESRPPTEEPSQGAQATKKKKEDRPPTQENPEKIAFMVALGLVTTEHLEEIQSKRQERKRRSTANPAYSGLLETERKRLASNYLNNPLFLTARANEDPCWKNEITHDEHCAACKRGANLQPCGTCPGAYHLSCLEPPLKTAPKGVWVCPRCQQKALKKDEGVPWTGMLAIVHSYVTHKTVKEEEKQKLLQRGSELQNEHQQLEERDRRLASAVQKCLELKTSLLARQRGTQSSLDRLRALLRLIQGEQLLQVTMTTTSPAPLLAGPWTKPSVAATHPTVQHPQGHN.

Disordered regions lie at residues 79–99 (PDSLPVAPGRDRPPKQPPTFQ), 184–222 (SADNKPPPRLLSSPHPATHHCPLHPSSLPLTPPSPSLSP), 238–277 (VQTQPESTAESRPPTEEPSQGAQATKKKKEDRPPTQENPE), and 295–314 (EIQSKRQERKRRSTANPAYS). Basic and acidic residues predominate over residues 265–277 (KKEDRPPTQENPE). A PHD-type zinc finger spans residues 352-399 (DEHCAACKRGANLQPCGTCPGAYHLSCLEPPLKTAPKGVWVCPRCQQK). Residues 423–465 (KTVKEEEKQKLLQRGSELQNEHQQLEERDRRLASAVQKCLELK) adopt a coiled-coil conformation. The interval 507–531 (LLAGPWTKPSVAATHPTVQHPQGHN) is disordered. Residues 522-531 (PTVQHPQGHN) are compositionally biased toward polar residues.

The polypeptide is PHD finger protein 21B (PHF21B) (Homo sapiens (Human)).